Reading from the N-terminus, the 1584-residue chain is Adhesion G protein-coupled receptor B1 (1584 aa).

Positions 1-30 (MRGQAAAPGPVWILAPLLLLLLLLGRRARA) are cleaved as a signal peptide. Residues 31-948 (AAGADAGPGP…ANMEKATLPS (918 aa)) lie on the Extracellular side of the membrane. N64 carries an N-linked (GlcNAc...) asparagine glycan. The disordered stretch occupies residues 146-167 (RRQQPPQHDGLRPRAGPPGPTD). Residues 261-315 (TGGWKLWSLWGECTRDCGGGLQTRTRTCLPAPGVEGGGCEGVLEEGRQCNREACG) enclose the TSP type-1 1 domain. Intrachain disulfides connect C273-C309, C277-C314, and C288-C299. The tract at residues 313–335 (ACGPAGRTSSRSQSLRSTDARRR) is disordered. Over residues 319–329 (RTSSRSQSLRS) the composition is skewed to low complexity. TSP type-1 domains are found at residues 354-407 (DPAA…AVCP), 409-462 (HGAW…ALCP), 467-520 (DGNW…QQCP), and 522-575 (DGKW…QRCP). 14 disulfide bridges follow: C366-C400, C370-C406, C381-C390, C421-C456, C425-C461, C436-C446, C479-C514, C483-C519, C494-C504, C534-C569, C538-C574, C549-C559, C581-C616, and C604-C634. A glycan (N-linked (GlcNAc...) asparagine) is linked at N401. N-linked (GlcNAc...) asparagine glycosylation is present at N607. Position 609 is a phosphothreonine (T609). Residues N692, N844, N877, and N881 are each glycosylated (N-linked (GlcNAc...) asparagine). The GAIN-B domain occupies 760–939 (RDAYQVTDNL…AILAQLSADA (180 aa)). 2 disulfides stabilise this stretch: C884/C921 and C909/C923. Positions 884–939 (CILWDETDVPSSSAPPQLGPWSWRGCRTVPLDALRTRCLCDRLSTFAILAQLSADA) are GPS. The tract at residues 927–943 (STFAILAQLSADANMEK) is N-terminal stalk following vasculostatin-120 cleavage which is not required for signaling activity. The helical transmembrane segment at 949–969 (VTLIVGCGVSSLTLLMLVIIY) threads the bilayer. Over 970-980 (VSVWRYIRSER) the chain is Cytoplasmic. A helical membrane pass occupies residues 981–1001 (SVILINFCLSIISSNALILIG). Topologically, residues 1002-1008 (QTQTRNK) are extracellular. The chain crosses the membrane as a helical span at residues 1009-1029 (VVCTLVAAFLHFFFLSSFCWV). Topologically, residues 1030 to 1052 (LTEAWQSYMAVTGHLRNRLIRKR) are cytoplasmic. Residues 1053–1073 (FLCLGWGLPALVVAISVGFTK) traverse the membrane as a helical segment. At 1074 to 1093 (AKGYSTMNYCWLSLEGGLLY) the chain is on the extracellular side. The chain crosses the membrane as a helical span at residues 1094-1114 (AFVGPAAAVVLVNMVIGILVF). Topologically, residues 1115–1136 (NKLVSKDGITDKKLKERAGASL) are cytoplasmic. The helical transmembrane segment at 1137–1157 (WSSCVVLPLLALTWMSAVLAV) threads the bilayer. Topologically, residues 1158–1166 (TDRRSALFQ) are extracellular. A helical membrane pass occupies residues 1167–1187 (ILFAVFDSLEGFVIVMVHCIL). The Cytoplasmic portion of the chain corresponds to 1188 to 1584 (RREVQDAVKC…QDIIDLQTEV (397 aa)). The tract at residues 1365–1584 (YSIHIDQMPQ…QDIIDLQTEV (220 aa)) is involved in interaction with MAGI1. Disordered stretches follow at residues 1385–1475 (EASL…RRKS) and 1501–1548 (RKLQ…KKEL). A compositionally biased stretch (pro residues) spans 1391-1439 (RSPPSRQPPSGGPPEAPPAQPPPPPPPPPPPPQQPLPPPPNLEPAPPSL). Residues 1453-1469 (TGPSTKNENVATLSVSS) are compositionally biased toward polar residues. Residue S1469 is modified to Phosphoserine. Residues 1501–1522 (RKLQHAAEKDKEVLGPDSKPEK) are compositionally biased toward basic and acidic residues. Positions 1581–1584 (QTEV) are indispensable for interaction with MAGI1.

This sequence belongs to the G-protein coupled receptor 2 family. LN-TM7 subfamily. In terms of assembly, interacts with ELMO1 and DOCK. When bound to ELMO1 and DOCK1, acts as a module to promote apoptotic cell engulfment. Interacts with MDM2; the interaction results in inhibition of MDM2-mediated ubiquitination and degradation of DLG4/PSD95. Interacts with PARD3 and TIAM1; the interaction is required for correct dendritic. localization of PARD3 and TIAM1 and for dendritic spine formation. Interacts with MAGI1. Interacts with MAGI3. Interacts with BAIAP2. Interacts with PHYHIP. Interacts with DLG4 (via PDZ domain). Vasculostatin-120: Interacts with CD36. Vasculostatin-120: Interacts with ARRB2. Interacts with BAIAP3; this interaction is direct. Proteolytically cleaved to produce vasculostatin-40 and vasculostatin-120. Vasculostatin-40 is the major form and is produced through proteolytic cleavage by MMP14 between residues 321 and 329 with cleavage likely to be between Ser-326 and Leu-327. In terms of processing, ubiquitinated. In terms of tissue distribution, expressed in brain (at protein level). Expressed on mononuclear phagocytes and monocyte-derived macrophages in the gastric mucosa (at protein level). Expressed in normal pancreatic tissue but not in pancreatic tumor tissue. Reduced or no expression is observed in some glioblastomas.

It localises to the cell membrane. The protein localises to the cell projection. The protein resides in the phagocytic cup. It is found in the cell junction. Its subcellular location is the focal adhesion. It localises to the dendritic spine. The protein localises to the postsynaptic density. The protein resides in the secreted. Phosphatidylserine receptor which enhances the engulfment of apoptotic cells. Also mediates the binding and engulfment of Gram-negative bacteria. Stimulates production of reactive oxygen species by macrophages in response to Gram-negative bacteria, resulting in enhanced microbicidal macrophage activity. In the gastric mucosa, required for recognition and engulfment of apoptotic gastric epithelial cells. Promotes myoblast fusion. Activates the Rho pathway in a G-protein-dependent manner. Inhibits MDM2-mediated ubiquitination and degradation of DLG4/PSD95, promoting DLG4 stability and regulating synaptic plasticity. Required for the formation of dendritic spines by ensuring the correct localization of PARD3 and TIAM1. Potent inhibitor of angiogenesis in brain and may play a significant role as a mediator of the p53/TP53 signal in suppression of glioblastoma. Functionally, inhibits angiogenesis in a CD36-dependent manner. Its function is as follows. Inhibits angiogenesis. The chain is Adhesion G protein-coupled receptor B1 from Homo sapiens (Human).